The primary structure comprises 260 residues: Indole-3-glycerol phosphate synthase (260 aa).

The protein belongs to the TrpC family.

It catalyses the reaction 1-(2-carboxyphenylamino)-1-deoxy-D-ribulose 5-phosphate + H(+) = (1S,2R)-1-C-(indol-3-yl)glycerol 3-phosphate + CO2 + H2O. It functions in the pathway amino-acid biosynthesis; L-tryptophan biosynthesis; L-tryptophan from chorismate: step 4/5. This Thermoanaerobacter pseudethanolicus (strain ATCC 33223 / 39E) (Clostridium thermohydrosulfuricum) protein is Indole-3-glycerol phosphate synthase.